A 312-amino-acid polypeptide reads, in one-letter code: MAHSHSHADSHLPKDNNARRLLFAFIVTAGFMLLEVVGGILSGSLALLADAGHMLTDAAALLFALLVVQFSRRPPTVRHTFGWLRLTTLAAFVNAIALVVITLLIVWEAIERFYTPRPVAGNLMMVIAVAGLLANLFAFWILHRGSDEKNLNVRAAALHVMGDLLGSVGAIVAALIIIWTGWTPADPILSILVSVLVLRSAWRLLKDSVNELLEGAPVSLDINALQRHLSREIPEVRNVHHVHVWMVGEKPVMTLHAQVIPPHDHDALLERIQDFLMHEYHIAHATIQMEYQMCHGPDCHLNQTPSGHVHHH.

5 helical membrane-spanning segments follow: residues 21–41 (LLFAFIVTAGFMLLEVVGGIL), 48–68 (LADAGHMLTDAAALLFALLVV), 90–110 (AAFVNAIALVVITLLIVWEAI), 123–143 (LMMVIAVAGLLANLFAFWILH), and 164–184 (LLGSVGAIVAALIIIWTGWTP).

The protein belongs to the cation diffusion facilitator (CDF) transporter (TC 2.A.4) family. SLC30A subfamily.

It localises to the cell inner membrane. Involved in zinc efflux across the cytoplasmic membrane, thus reducing zinc accumulation in the cytoplasm and rendering bacteria more resistant to zinc. It may contribute to zinc homeostasis at low concentrations of zinc. This chain is Zinc transporter ZitB, found in Salmonella typhi.